The primary structure comprises 205 residues: MMADRTISSPRGPGDFLDGQMLIAMPSMRDERFNRALVYICAHSAEGAMGIVVNQPATHIDFGDLLVQLDVVPATKRIQLPPRAELVKVLRGGPVETGRGFVLHSSDFFLENATLPIDNGICLTASLDILKAIAGGQGPESAVLALGYAGWAPGQLETEIQANGWLHCPADPELIFGESVDAKYDLALRKLGVHPGMLSTDAGHA.

The protein belongs to the UPF0301 (AlgH) family.

This chain is UPF0301 protein AZC_0488, found in Azorhizobium caulinodans (strain ATCC 43989 / DSM 5975 / JCM 20966 / LMG 6465 / NBRC 14845 / NCIMB 13405 / ORS 571).